We begin with the raw amino-acid sequence, 258 residues long: Pimeloyl-[acyl-carrier protein] methyl ester esterase (258 aa).

Residues 16–244 (LVLVHGWGMN…QSSHAPFMTE (229 aa)) form the AB hydrolase-1 domain. Substrate is bound by residues Trp-22, 82–83 (SL), and 146–150 (FMALQ). Ser-82 serves as the catalytic Nucleophile. Catalysis depends on residues Asp-210 and His-238. His-238 contributes to the substrate binding site.

This sequence belongs to the AB hydrolase superfamily. Carboxylesterase BioH family. Monomer.

It is found in the cytoplasm. It carries out the reaction 6-carboxyhexanoyl-[ACP] methyl ester + H2O = 6-carboxyhexanoyl-[ACP] + methanol + H(+). Its pathway is cofactor biosynthesis; biotin biosynthesis. In terms of biological role, the physiological role of BioH is to remove the methyl group introduced by BioC when the pimeloyl moiety is complete. It allows to synthesize pimeloyl-ACP via the fatty acid synthetic pathway through the hydrolysis of the ester bonds of pimeloyl-ACP esters. The protein is Pimeloyl-[acyl-carrier protein] methyl ester esterase of Vibrio atlanticus (strain LGP32) (Vibrio splendidus (strain Mel32)).